A 233-amino-acid chain; its full sequence is Probable transglycosylase IsaA (233 aa).

The N-terminal stretch at 1-29 (MKKTIMASSLAVALGVTGYAAGTGHQAHA) is a signal peptide.

It belongs to the transglycosylase family. IsaA subfamily.

Its subcellular location is the secreted. Is able to cleave peptidoglycan. This chain is Probable transglycosylase IsaA (isaA), found in Staphylococcus aureus (strain USA300).